Consider the following 125-residue polypeptide: Probable 4-amino-4-deoxy-L-arabinose-phosphoundecaprenol flippase subunit ArnF (125 aa).

The Cytoplasmic segment spans residues 1-2 (MG). The chain crosses the membrane as a helical span at residues 3-23 (VMWGLISVAIASLAQLSLGFA). At 24–33 (MMRLPSIAHP) the chain is on the periplasmic side. The chain crosses the membrane as a helical span at residues 34–54 (LAFISGLGAFNAATLALFAGL). Residues 55–76 (AGYLVSVFCWQKTLHTLALSKA) lie on the Cytoplasmic side of the membrane. The helical transmembrane segment at 77–97 (YALLSLSYVLVWVASMLLPGL) threads the bilayer. Residues 98 to 100 (QGA) lie on the Periplasmic side of the membrane. The chain crosses the membrane as a helical span at residues 101–121 (FSLKAMLGVLCIMAGVMLIFL). At 122–125 (PARS) the chain is on the cytoplasmic side.

The protein belongs to the ArnF family. In terms of assembly, heterodimer of ArnE and ArnF.

Its subcellular location is the cell inner membrane. It participates in bacterial outer membrane biogenesis; lipopolysaccharide biosynthesis. Translocates 4-amino-4-deoxy-L-arabinose-phosphoundecaprenol (alpha-L-Ara4N-phosphoundecaprenol) from the cytoplasmic to the periplasmic side of the inner membrane. The protein is Probable 4-amino-4-deoxy-L-arabinose-phosphoundecaprenol flippase subunit ArnF of Salmonella choleraesuis (strain SC-B67).